Consider the following 1015-residue polypeptide: Putative calcium-transporting ATPase 7, plasma membrane-type (1015 aa).

Met-1 is modified (N-acetylmethionine). At 1–161 (MESYLNSNFD…NKFAESELRS (161 aa)) the chain is on the cytoplasmic side. Residues 20–31 (VLEKWRNLCSVV) form an interaction with calmodulin region. Ser-45 carries the phosphoserine; by CPK modification. The chain crosses the membrane as a helical span at residues 162–182 (FWVFVWEALQDMTLMILGVCA). Topologically, residues 183–200 (FVSLIVGIATEGWPQGSH) are lumenal. A helical transmembrane segment spans residues 201-221 (DGLGIVASILLVVFVTATSDY). The Cytoplasmic segment spans residues 222 to 349 (RQSLQFRDLD…DDETPLQVKL (128 aa)). Residues 350-369 (NGVATIIGKIGLSFAIVTFA) form a helical membrane-spanning segment. Topologically, residues 370 to 399 (VLVQGMFMRKLSLGPHWWWSGDDALELLEY) are lumenal. Residues 400–417 (FAIAVTIVVVAVPEGLPL) traverse the membrane as a helical segment. Residues 418 to 811 (AVTLSLAFAM…KWGRSVYINI (394 aa)) are Cytoplasmic-facing. The active-site 4-aspartylphosphate intermediate is Asp-455. Positions 756 and 760 each coordinate Mg(2+). The chain crosses the membrane as a helical span at residues 812-830 (QKFVQFQLTVNVVALIVNF). The Lumenal segment spans residues 831–841 (SSACLTGSAPL). Residues 842-862 (TAVQLLWVNMIMDTLGALALA) form a helical membrane-spanning segment. The Cytoplasmic segment spans residues 863-882 (TEPPNNELMKRMPVGRRGNF). A helical transmembrane segment spans residues 883–905 (ITNAMWRNILGQAVYQFIIIWIL). Residues 906 to 917 (QAKGKSMFGLVG) are Lumenal-facing. Residues 918 to 939 (SDSTLVLNTLIFNCFVFCQVFN) traverse the membrane as a helical segment. The Cytoplasmic segment spans residues 940–957 (EVSSREMEEIDVFKGILD). The helical transmembrane segment at 958 to 979 (NYVFVVVIGATVFFQIIIIEFL) threads the bilayer. Residues 980–989 (GTFASTTPLT) are Lumenal-facing. Residues 990–1011 (IVQWFFSIFVGFLGMPIAAGLK) form a helical membrane-spanning segment. Residues 1012 to 1015 (KIPV) lie on the Cytoplasmic side of the membrane.

Belongs to the cation transport ATPase (P-type) (TC 3.A.3) family. Type IIB subfamily.

The protein resides in the membrane. It carries out the reaction Ca(2+)(in) + ATP + H2O = Ca(2+)(out) + ADP + phosphate + H(+). Its activity is regulated as follows. Activated by calmodulin. Its function is as follows. This magnesium-dependent enzyme catalyzes the hydrolysis of ATP coupled with the translocation of calcium from the cytosol out of the cell or into organelles. This Arabidopsis thaliana (Mouse-ear cress) protein is Putative calcium-transporting ATPase 7, plasma membrane-type (ACA7).